Consider the following 445-residue polypeptide: Argininosuccinate synthase (445 aa).

ATP contacts are provided by residues 17–25 (AFSGGLDTS) and A43. Y99 provides a ligand contact to L-citrulline. ATP contacts are provided by G129 and T131. Residues T131, N135, and D136 each coordinate L-aspartate. L-citrulline is bound at residue N135. D136 contributes to the ATP binding site. R139 and S192 together coordinate L-citrulline. D194 provides a ligand contact to ATP. L-citrulline is bound by residues T201, E203, and E280.

This sequence belongs to the argininosuccinate synthase family. Type 2 subfamily. As to quaternary structure, homotetramer.

It localises to the cytoplasm. It carries out the reaction L-citrulline + L-aspartate + ATP = 2-(N(omega)-L-arginino)succinate + AMP + diphosphate + H(+). It participates in amino-acid biosynthesis; L-arginine biosynthesis; L-arginine from L-ornithine and carbamoyl phosphate: step 2/3. This Rhodopseudomonas palustris (strain ATCC BAA-98 / CGA009) protein is Argininosuccinate synthase.